The following is a 471-amino-acid chain: D-hydantoinase (471 aa).

Residues histidine 58, histidine 60, and lysine 150 each contribute to the Zn(2+) site. Lysine 150 carries the N6-carboxylysine modification. A substrate-binding site is contributed by tyrosine 155. Positions 183 and 239 each coordinate Zn(2+). Serine 288 contributes to the substrate binding site. Aspartate 315 is a binding site for Zn(2+). Substrate is bound at residue asparagine 337.

This sequence belongs to the metallo-dependent hydrolases superfamily. Hydantoinase/dihydropyrimidinase family. In terms of assembly, homotetramer. Requires Zn(2+) as cofactor. The cofactor is Ni(2+). It depends on Co(2+) as a cofactor. Mn(2+) is required as a cofactor. Carboxylation allows a single lysine to coordinate two zinc ions.

With respect to regulation, completely inhibited by p-chloromercuribenzoate and partially inhibited by metal chelating agents. Functionally, catalyzes the stereospecific hydrolysis of the cyclic amide bond of D-hydantoin. Has no activity on dihydropyrimidines. This chain is D-hydantoinase, found in Geobacillus stearothermophilus (Bacillus stearothermophilus).